The chain runs to 490 residues: GTPase Der (490 aa).

EngA-type G domains follow at residues methionine 1–valine 165 and leucine 227–threonine 400. Residues glycine 7–serine 14, aspartate 54–valine 58, asparagine 117–aspartate 120, glycine 233–serine 240, aspartate 280–leucine 284, and asparagine 345–aspartate 348 each bind GTP. One can recognise a KH-like domain in the interval threonine 401–proline 485.

The protein belongs to the TRAFAC class TrmE-Era-EngA-EngB-Septin-like GTPase superfamily. EngA (Der) GTPase family. Associates with the 50S ribosomal subunit.

Functionally, GTPase that plays an essential role in the late steps of ribosome biogenesis. This Chlamydia trachomatis serovar L2b (strain UCH-1/proctitis) protein is GTPase Der.